A 99-amino-acid chain; its full sequence is Large ribosomal subunit protein bL25 (99 aa).

Belongs to the bacterial ribosomal protein bL25 family. In terms of assembly, part of the 50S ribosomal subunit; part of the 5S rRNA/L5/L18/L25 subcomplex. Contacts the 5S rRNA. Binds to the 5S rRNA independently of L5 and L18.

This is one of the proteins that binds to the 5S RNA in the ribosome where it forms part of the central protuberance. This chain is Large ribosomal subunit protein bL25, found in Nostoc sp. (strain PCC 7120 / SAG 25.82 / UTEX 2576).